The following is a 191-amino-acid chain: Fe/S biogenesis protein NfuA (191 aa).

[4Fe-4S] cluster is bound by residues Cys-149 and Cys-152.

Belongs to the NfuA family. Homodimer. The cofactor is [4Fe-4S] cluster.

Its function is as follows. Involved in iron-sulfur cluster biogenesis. Binds a 4Fe-4S cluster, can transfer this cluster to apoproteins, and thereby intervenes in the maturation of Fe/S proteins. Could also act as a scaffold/chaperone for damaged Fe/S proteins. The polypeptide is Fe/S biogenesis protein NfuA (Yersinia pseudotuberculosis serotype O:1b (strain IP 31758)).